A 371-amino-acid polypeptide reads, in one-letter code: ETS-related transcription factor Elf-3 (371 aa).

Positions 46-132 (NPQMSLEGTE…AQLRDLTSSS (87 aa)) constitute a PNT domain. The short motif at 137–145 (SWIIELLEK) is the 9aaTAD element. Residues 173 to 251 (GQQASPYHPG…HGKRKRGRPR (79 aa)) are disordered. The segment covering 181–216 (PGSCGAGAPSPGSSDVSTAGTGASRSSHSSDSGGSD) has biased composition (low complexity). Residues 231–241 (GFRDCKKGDPK) show a composition bias toward basic and acidic residues. Residues 242–251 (HGKRKRGRPR) show a composition bias toward basic residues. Positions 273–355 (THLWEFIRDI…DGRRLVYKFG (83 aa)) form a DNA-binding region, ETS.

This sequence belongs to the ETS family. In terms of assembly, interacts with TBP. Interacts with CREBBP and EP300; these act as transcriptional coactivators of ELF3 and positively modulate its function. Interacts with XRCC5/KU86 and XRCC6/KU70; these inhibit the ability of ELF3 to bind DNA and negatively modulate its transcriptional activity. Associated with CLND7 and POU2F3. Interacts with ZNF768. Expressed exclusively in tissues containing a high content of terminally differentiated epithelial cells including mammary gland, colon, trachea, kidney, prostate, uterus, stomach and skin.

It is found in the cytoplasm. The protein localises to the nucleus. In terms of biological role, transcriptional activator that binds and transactivates ETS sequences containing the consensus nucleotide core sequence GGA[AT]. Acts synergistically with POU2F3 to transactivate the SPRR2A promoter and with RUNX1 to transactivate the ANGPT1 promoter. Also transactivates collagenase, CCL20, CLND7, FLG, KRT8, NOS2, PTGS2, SPRR2B, TGFBR2 and TGM3 promoters. Represses KRT4 promoter activity. Involved in mediating vascular inflammation. May play an important role in epithelial cell differentiation and tumorigenesis. May be a critical downstream effector of the ERBB2 signaling pathway. May be associated with mammary gland development and involution. Plays an important role in the regulation of transcription with TATA-less promoters in preimplantation embryos, which is essential in preimplantation development. The chain is ETS-related transcription factor Elf-3 from Homo sapiens (Human).